The following is a 266-amino-acid chain: MKLSLSPPPYADAPVVVLISGLGGSGSYWLPQLAVLEQEYQVVCYDQRGTGNNPDTLAEDYSIAQMAAELHQVLVAAGIEHYAVVGHALGALVGMQLALDYPASVTVLVSVNGWLRINAHTRRCFQVRERLLYSGGAQAWVEAQPLFLYPADWMAARAPRLEAEDALALAHFQGKNNLLRRLNALKRADFSHHADRIRCPVQIICASDDLLVPSACSSELHAALPDSQKMVMRYGGHACNVTDPETFNALLLNGLASLLHHREAAL.

The 102-residue stretch at 14–115 folds into the AB hydrolase-1 domain; sequence PVVVLISGLG…TVLVSVNGWL (102 aa).

Belongs to the AB hydrolase superfamily. Hydrolase RutD family.

It carries out the reaction carbamate + 2 H(+) = NH4(+) + CO2. Functionally, involved in pyrimidine catabolism. May facilitate the hydrolysis of carbamate, a reaction that can also occur spontaneously. This chain is Putative carbamate hydrolase RutD, found in Escherichia coli O9:H4 (strain HS).